Here is a 169-residue protein sequence, read N- to C-terminus: Putative tRNA (cytidine(34)-2'-O)-methyltransferase (169 aa).

S-adenosyl-L-methionine is bound by residues Val79, Gly104, Ile125, and Ser134.

Belongs to the class IV-like SAM-binding methyltransferase superfamily. RNA methyltransferase TrmH family. TrmL subfamily.

The protein resides in the cytoplasm. It carries out the reaction cytidine(34) in tRNA + S-adenosyl-L-methionine = 2'-O-methylcytidine(34) in tRNA + S-adenosyl-L-homocysteine + H(+). The catalysed reaction is 5-carboxymethylaminomethyluridine(34) in tRNA(Leu) + S-adenosyl-L-methionine = 5-carboxymethylaminomethyl-2'-O-methyluridine(34) in tRNA(Leu) + S-adenosyl-L-homocysteine + H(+). Could methylate the ribose at the nucleotide 34 wobble position in tRNA. The polypeptide is Putative tRNA (cytidine(34)-2'-O)-methyltransferase (Lactococcus lactis subsp. cremoris (strain MG1363)).